We begin with the raw amino-acid sequence, 476 residues long: Raffinose invertase (476 aa).

Residues 35-38, Q54, 97-98, 159-160, E214, and W297 contribute to the substrate site; these read WMND, FS, and RD. Residue D38 is part of the active site.

It belongs to the glycosyl hydrolase 32 family. Homodimer.

The catalysed reaction is Hydrolysis of terminal non-reducing beta-D-fructofuranoside residues in beta-D-fructofuranosides.. May prevent the potential hasard of excessive sucrose accumulation. The chain is Raffinose invertase (rafD) from Escherichia coli.